A 197-amino-acid chain; its full sequence is Ribonuclease HII (197 aa).

One can recognise an RNase H type-2 domain in the interval 11-197; the sequence is HLIAGVDEVG…FAPVKKILGL (187 aa). A divalent metal cation-binding residues include aspartate 17, glutamate 18, and aspartate 109.

This sequence belongs to the RNase HII family. Mn(2+) is required as a cofactor. The cofactor is Mg(2+).

It is found in the cytoplasm. The enzyme catalyses Endonucleolytic cleavage to 5'-phosphomonoester.. In terms of biological role, endonuclease that specifically degrades the RNA of RNA-DNA hybrids. The protein is Ribonuclease HII of Actinobacillus pleuropneumoniae serotype 7 (strain AP76).